Here is a 417-residue protein sequence, read N- to C-terminus: Guanine nucleotide-exchange factor SEC12 (417 aa).

The Cytoplasmic portion of the chain corresponds to 1 to 388 (MGRRRGVELY…QLHLLPSRRS (388 aa)). A 3'-nitrotyrosine modification is found at Tyr10. The interval 101 to 135 (KGSKAEKSGSKEQGPRQRKGAPPAEKKSGAQVHPE) is disordered. A compositionally biased stretch (basic and acidic residues) spans 103–115 (SKAEKSGSKEQGP). WD repeat units follow at residues 152–191 (SNEP…KVLE), 194–232 (AHEG…TQLQ), and 298–337 (CGHE…RLYY). The chain crosses the membrane as a helical span at residues 389-409 (VPVWLLLLLCVGLIIVTILLL). At 410 to 417 (QTAFPGFL) the chain is on the lumenal side.

In terms of assembly, interacts with SAR1B (GDP-bound form). Interacts with MIA2; recruits PREB to endoplasmic reticulum exit sites. Interacts with CIDEB; facilitating loading of SCAP-SREBP into COPII vesicles.

It localises to the endoplasmic reticulum membrane. Its subcellular location is the nucleus. Functionally, guanine nucleotide exchange factor (GEF) that regulates the assembly of the coat protein complex II/COPII in endoplasmic reticulum (ER) to Golgi vesicle-mediated transport. Selectively activates SAR1A and SAR1B by promoting the exchange of guanosine diphosphate (GDP) for guanosine triphosphate (GTP) in these small GTPases. In their activated GTP-bound state, SAR1A and SAR1B insert into the membrane of the endoplasmic reticulum where they recruit the remainder of the coat protein complex II/COPII which is responsible for both the sorting of proteins and the deformation and budding of membranes into vesicles destined to the Golgi. In terms of biological role, was first identified based on its probable role in the regulation of pituitary gene transcription. Binds to the prolactin gene (PRL) promoter and seems to activate transcription. The protein is Guanine nucleotide-exchange factor SEC12 of Mus musculus (Mouse).